The sequence spans 144 residues: 3-hydroxyacyl-[acyl-carrier-protein] dehydratase FabZ (144 aa).

Histidine 51 is a catalytic residue.

The protein belongs to the thioester dehydratase family. FabZ subfamily.

It is found in the cytoplasm. It catalyses the reaction a (3R)-hydroxyacyl-[ACP] = a (2E)-enoyl-[ACP] + H2O. Functionally, involved in unsaturated fatty acids biosynthesis. Catalyzes the dehydration of short chain beta-hydroxyacyl-ACPs and long chain saturated and unsaturated beta-hydroxyacyl-ACPs. The polypeptide is 3-hydroxyacyl-[acyl-carrier-protein] dehydratase FabZ (fabZ1) (Enterococcus faecalis (strain ATCC 700802 / V583)).